The chain runs to 347 residues: D-alanine--D-alanine ligase (347 aa).

Residues 131–333 (KRVLESAGIA…YPELIERLVD (203 aa)) form the ATP-grasp domain. 161–216 (EEKLAYPVFAKPSNMGSSVGISKSENQEELRQALKLAFRYDSRVLVEQGVNAREIE) is a binding site for ATP. Asp-287, Glu-300, and Asn-302 together coordinate Mg(2+).

Belongs to the D-alanine--D-alanine ligase family. The cofactor is Mg(2+). Mn(2+) is required as a cofactor.

Its subcellular location is the cytoplasm. It catalyses the reaction 2 D-alanine + ATP = D-alanyl-D-alanine + ADP + phosphate + H(+). The protein operates within cell wall biogenesis; peptidoglycan biosynthesis. In terms of biological role, cell wall formation. This chain is D-alanine--D-alanine ligase, found in Streptococcus pneumoniae (strain P1031).